The chain runs to 251 residues: PF03932 family protein CutC (251 aa).

This sequence belongs to the CutC family.

The protein localises to the cytoplasm. The polypeptide is PF03932 family protein CutC (Edwardsiella ictaluri (strain 93-146)).